Here is a 431-residue protein sequence, read N- to C-terminus: Gamma-glutamyl phosphate reductase (431 aa).

The protein belongs to the gamma-glutamyl phosphate reductase family.

Its subcellular location is the cytoplasm. The enzyme catalyses L-glutamate 5-semialdehyde + phosphate + NADP(+) = L-glutamyl 5-phosphate + NADPH + H(+). Its pathway is amino-acid biosynthesis; L-proline biosynthesis; L-glutamate 5-semialdehyde from L-glutamate: step 2/2. Catalyzes the NADPH-dependent reduction of L-glutamate 5-phosphate into L-glutamate 5-semialdehyde and phosphate. The product spontaneously undergoes cyclization to form 1-pyrroline-5-carboxylate. This Methylobacterium nodulans (strain LMG 21967 / CNCM I-2342 / ORS 2060) protein is Gamma-glutamyl phosphate reductase.